We begin with the raw amino-acid sequence, 377 residues long: Protein ECM9 (377 aa).

Its function is as follows. May be involved in cell wall organization and biogenesis. This Saccharomyces cerevisiae (strain ATCC 204508 / S288c) (Baker's yeast) protein is Protein ECM9 (ECM9).